A 129-amino-acid chain; its full sequence is Dormancy-associated protein 2 (129 aa).

An N-terminal signal peptide occupies residues 1–25 (MDSRKAMLILGLLAMVLLISSEVSA). Positions 110-129 (GGYHGGGGHGGHGGASNNGN) are disordered.

This sequence belongs to the DRM1/ARP family. As to expression, expressed in axilary buds. Detected in growing stems, leaflets and floral organs, but not in roots.

This Pisum sativum (Garden pea) protein is Dormancy-associated protein 2.